Reading from the N-terminus, the 475-residue chain is Ribulose bisphosphate carboxylase large chain (475 aa).

A propeptide spanning residues M1–A2 is cleaved from the precursor. Residue P3 is modified to N-acetylproline. K14 carries the post-translational modification N6,N6,N6-trimethyllysine. Substrate is bound by residues N123 and T173. K175 (proton acceptor) is an active-site residue. K177 contacts substrate. Mg(2+)-binding residues include K201, D203, and E204. K201 carries the N6-carboxylysine modification. H294 serves as the catalytic Proton acceptor. Positions 295, 327, and 379 each coordinate substrate.

This sequence belongs to the RuBisCO large chain family. Type I subfamily. Heterohexadecamer of 8 large chains and 8 small chains; disulfide-linked. The disulfide link is formed within the large subunit homodimers. Mg(2+) is required as a cofactor. In terms of processing, the disulfide bond which can form in the large chain dimeric partners within the hexadecamer appears to be associated with oxidative stress and protein turnover.

The protein localises to the plastid. It is found in the chloroplast. It catalyses the reaction 2 (2R)-3-phosphoglycerate + 2 H(+) = D-ribulose 1,5-bisphosphate + CO2 + H2O. It carries out the reaction D-ribulose 1,5-bisphosphate + O2 = 2-phosphoglycolate + (2R)-3-phosphoglycerate + 2 H(+). RuBisCO catalyzes two reactions: the carboxylation of D-ribulose 1,5-bisphosphate, the primary event in carbon dioxide fixation, as well as the oxidative fragmentation of the pentose substrate in the photorespiration process. Both reactions occur simultaneously and in competition at the same active site. The polypeptide is Ribulose bisphosphate carboxylase large chain (Oedogonium cardiacum (Filamentous green alga)).